The following is a 543-amino-acid chain: Chaperonin GroEL (543 aa).

Residues 29–32, 86–90, Gly413, 476–478, and Asp492 each bind ATP; these read TLGP, DGTTT, and NAA.

Belongs to the chaperonin (HSP60) family. In terms of assembly, forms a cylinder of 14 subunits composed of two heptameric rings stacked back-to-back. Interacts with the co-chaperonin GroES.

It localises to the cytoplasm. It catalyses the reaction ATP + H2O + a folded polypeptide = ADP + phosphate + an unfolded polypeptide.. In terms of biological role, together with its co-chaperonin GroES, plays an essential role in assisting protein folding. The GroEL-GroES system forms a nano-cage that allows encapsulation of the non-native substrate proteins and provides a physical environment optimized to promote and accelerate protein folding. The polypeptide is Chaperonin GroEL (Streptococcus pyogenes serotype M1).